The primary structure comprises 450 residues: Tubulin alpha chain (450 aa).

Gln-11 provides a ligand contact to GTP. Position 40 is an N6-acetyllysine (Lys-40). GTP is bound by residues Glu-71, Ser-140, Gly-144, Thr-145, Thr-179, Asn-206, and Asn-228. Glu-71 lines the Mg(2+) pocket. Glu-254 is an active-site residue.

This sequence belongs to the tubulin family. Dimer of alpha and beta chains. A typical microtubule is a hollow water-filled tube with an outer diameter of 25 nm and an inner diameter of 15 nM. Alpha-beta heterodimers associate head-to-tail to form protofilaments running lengthwise along the microtubule wall with the beta-tubulin subunit facing the microtubule plus end conferring a structural polarity. Microtubules usually have 13 protofilaments but different protofilament numbers can be found in some organisms and specialized cells. Requires Mg(2+) as cofactor. Post-translationally, acetylation of alpha chains at Lys-40 stabilizes microtubules and affects affinity and processivity of microtubule motors. This modification has a role in multiple cellular functions, ranging from cell motility, cell cycle progression or cell differentiation to intracellular trafficking and signaling.

It localises to the cytoplasm. The protein localises to the cytoskeleton. The catalysed reaction is GTP + H2O = GDP + phosphate + H(+). In terms of biological role, tubulin is the major constituent of microtubules, a cylinder consisting of laterally associated linear protofilaments composed of alpha- and beta-tubulin heterodimers. Microtubules grow by the addition of GTP-tubulin dimers to the microtubule end, where a stabilizing cap forms. Below the cap, tubulin dimers are in GDP-bound state, owing to GTPase activity of alpha-tubulin. In Oxytricha granulifera (Ciliate), this protein is Tubulin alpha chain.